Reading from the N-terminus, the 323-residue chain is E3 ubiquitin-protein ligase SIRP1 (323 aa).

The RING-type; atypical zinc finger occupies 199-240 (CSVCLDDLEVGSQAKQMPCEHKFHSSCILPWLELHSSCPVCR). Disordered regions lie at residues 248-280 (TKDL…ESSN) and 296-323 (REAQ…AGHS). The segment covering 259–269 (RVEDSHEEVRA) has biased composition (basic and acidic residues).

The protein localises to the cytoplasm. The enzyme catalyses S-ubiquitinyl-[E2 ubiquitin-conjugating enzyme]-L-cysteine + [acceptor protein]-L-lysine = [E2 ubiquitin-conjugating enzyme]-L-cysteine + N(6)-ubiquitinyl-[acceptor protein]-L-lysine.. The protein operates within protein modification; protein ubiquitination. Functionally, possesses E3 ubiqutin-protein ligase activity in vitro. Acts as negative regulator of salinity stress tolerance mediated by the ubiquitin-proteasome degradation pathway. In Oryza sativa subsp. japonica (Rice), this protein is E3 ubiquitin-protein ligase SIRP1.